A 443-amino-acid polypeptide reads, in one-letter code: COP9 signalosome complex subunit 2 (443 aa).

Residues 1-275 (MSDMEDDFMC…DESGSPRRTT (275 aa)) form a mediates interaction with NIF3L1 region. Positions 254 to 416 (AHTDFFEAFK…QLLELDHQKR (163 aa)) constitute a PCI domain.

It belongs to the CSN2 family. Component of the CSN complex, composed of COPS1/GPS1, COPS2, COPS3, COPS4, COPS5, COPS6, COPS7 (COPS7A or COPS7B), COPS8 and COPS9 isoform 1. In the complex, it probably interacts directly with COPS1, COPS4, COPS5, COPS6 and COPS7 (COPS7A or COPS7B). Specifically interacts with the ligand binding domain of the thyroid receptor (TR). Does not require the presence of thyroid hormone for its interaction. Interacts with CUL1 and CUL2. Interacts with IRF8/ICSBP1 and with nuclear receptors NR2F1 and NR0B1. Interacts with NIF3L1. In terms of processing, phosphorylated by CK2 and PKD kinases.

It is found in the cytoplasm. It localises to the nucleus. In terms of biological role, essential component of the COP9 signalosome complex (CSN), a complex involved in various cellular and developmental processes. The CSN complex is an essential regulator of the ubiquitin (Ubl) conjugation pathway by mediating the deneddylation of the cullin subunits of SCF-type E3 ligase complexes, leading to decrease the Ubl ligase activity of SCF-type complexes such as SCF, CSA or DDB2. The complex is also involved in phosphorylation of p53/TP53, c-jun/JUN, IkappaBalpha/NFKBIA, ITPK1 and IRF8/ICSBP, possibly via its association with CK2 and PKD kinases. CSN-dependent phosphorylation of TP53 and JUN promotes and protects degradation by the Ubl system, respectively. Involved in early stage of neuronal differentiation via its interaction with NIF3L1. The sequence is that of COP9 signalosome complex subunit 2 (COPS2) from Homo sapiens (Human).